A 470-amino-acid polypeptide reads, in one-letter code: ATP synthase subunit beta (470 aa).

157–164 (GGAGVGKT) lines the ATP pocket.

It belongs to the ATPase alpha/beta chains family. As to quaternary structure, F-type ATPases have 2 components, CF(1) - the catalytic core - and CF(0) - the membrane proton channel. CF(1) has five subunits: alpha(3), beta(3), gamma(1), delta(1), epsilon(1). CF(0) has three main subunits: a(1), b(2) and c(9-12). The alpha and beta chains form an alternating ring which encloses part of the gamma chain. CF(1) is attached to CF(0) by a central stalk formed by the gamma and epsilon chains, while a peripheral stalk is formed by the delta and b chains.

Its subcellular location is the cell membrane. The catalysed reaction is ATP + H2O + 4 H(+)(in) = ADP + phosphate + 5 H(+)(out). Functionally, produces ATP from ADP in the presence of a proton gradient across the membrane. The catalytic sites are hosted primarily by the beta subunits. The chain is ATP synthase subunit beta from Pelotomaculum thermopropionicum (strain DSM 13744 / JCM 10971 / SI).